We begin with the raw amino-acid sequence, 709 residues long: Coiled-coil domain-containing protein 13 (709 aa).

3 coiled-coil regions span residues Ile-70–Leu-97, Glu-139–Lys-178, and Glu-206–Asn-288. Ser-258 bears the Phosphoserine mark. Residues Lys-281 to Lys-312 form a disordered region. Residues Ser-293–Ser-302 are compositionally biased toward low complexity. The stretch at Asp-323–Gln-457 forms a coiled coil. Disordered regions lie at residues Lys-462–Ser-499, Ser-512–Ala-542, and Lys-600–Gln-641. A phosphoserine mark is found at Ser-469 and Ser-532. Positions Gln-539–Glu-604 form a coiled coil.

In terms of assembly, interacts with PCM1, CEP290 and PCNT.

It localises to the cytoplasm. The protein resides in the cytoskeleton. The protein localises to the microtubule organizing center. Its subcellular location is the centrosome. It is found in the centriolar satellite. It localises to the cilium basal body. Functionally, required for primary cilia formation and promotes the localization of the ciliopathy protein BBS4 to both centriolar satellites and cilia. This is Coiled-coil domain-containing protein 13 from Mus musculus (Mouse).